Here is a 601-residue protein sequence, read N- to C-terminus: Elongation factor 4 (601 aa).

A tr-type G domain is found at 7–189; sequence DNIRNFSIVA…AIVKRLPAPK (183 aa). GTP-binding positions include 19-24 and 136-139; these read DHGKST and NKVD.

It belongs to the TRAFAC class translation factor GTPase superfamily. Classic translation factor GTPase family. LepA subfamily.

It localises to the cell inner membrane. The enzyme catalyses GTP + H2O = GDP + phosphate + H(+). Functionally, required for accurate and efficient protein synthesis under certain stress conditions. May act as a fidelity factor of the translation reaction, by catalyzing a one-codon backward translocation of tRNAs on improperly translocated ribosomes. Back-translocation proceeds from a post-translocation (POST) complex to a pre-translocation (PRE) complex, thus giving elongation factor G a second chance to translocate the tRNAs correctly. Binds to ribosomes in a GTP-dependent manner. In Methylorubrum extorquens (strain CM4 / NCIMB 13688) (Methylobacterium extorquens), this protein is Elongation factor 4.